A 334-amino-acid chain; its full sequence is Glutamyl-tRNA reductase (334 aa).

Substrate-binding positions include 49–52 (TCNR), S107, 112–114 (EDQ), and Q118. Residue C50 is the Nucleophile of the active site. 186–191 (GNGEMG) contacts NADP(+).

Belongs to the glutamyl-tRNA reductase family. In terms of assembly, homodimer.

It catalyses the reaction (S)-4-amino-5-oxopentanoate + tRNA(Glu) + NADP(+) = L-glutamyl-tRNA(Glu) + NADPH + H(+). It functions in the pathway porphyrin-containing compound metabolism; protoporphyrin-IX biosynthesis; 5-aminolevulinate from L-glutamyl-tRNA(Glu): step 1/2. In terms of biological role, catalyzes the NADPH-dependent reduction of glutamyl-tRNA(Glu) to glutamate 1-semialdehyde (GSA). This is Glutamyl-tRNA reductase from Alkaliphilus oremlandii (strain OhILAs) (Clostridium oremlandii (strain OhILAs)).